Reading from the N-terminus, the 235-residue chain is Small ribosomal subunit protein uS3 (235 aa).

Residues 39 to 107 (VRKFLNKELA…PAQINIAEVK (69 aa)) enclose the KH type-2 domain. A disordered region spans residues 215 to 235 (AQPEQQPADKPKKAPRGKGRK).

It belongs to the universal ribosomal protein uS3 family. In terms of assembly, part of the 30S ribosomal subunit. Forms a tight complex with proteins S10 and S14.

Binds the lower part of the 30S subunit head. Binds mRNA in the 70S ribosome, positioning it for translation. In Pasteurella multocida (strain Pm70), this protein is Small ribosomal subunit protein uS3.